The primary structure comprises 259 residues: Zinc import ATP-binding protein ZnuC (259 aa).

An ABC transporter domain is found at 11 to 225 (IRLENIYVHR…PEYLAIFGGQ (215 aa)). 43–50 (GPNGAGKS) lines the ATP pocket.

This sequence belongs to the ABC transporter superfamily. Zinc importer (TC 3.A.1.15.5) family. The complex is composed of two ATP-binding proteins (ZnuC), two transmembrane proteins (ZnuB) and a solute-binding protein (ZnuA).

The protein localises to the cell inner membrane. The catalysed reaction is Zn(2+)(out) + ATP(in) + H2O(in) = Zn(2+)(in) + ADP(in) + phosphate(in) + H(+)(in). Its function is as follows. Part of the ABC transporter complex ZnuABC involved in zinc import. Responsible for energy coupling to the transport system. This Acinetobacter baylyi (strain ATCC 33305 / BD413 / ADP1) protein is Zinc import ATP-binding protein ZnuC.